The following is a 123-amino-acid chain: Large ribosomal subunit protein uL14 (123 aa).

The protein belongs to the universal ribosomal protein uL14 family. As to quaternary structure, part of the 50S ribosomal subunit. Forms a cluster with proteins L3 and L19. In the 70S ribosome, L14 and L19 interact and together make contacts with the 16S rRNA in bridges B5 and B8.

Functionally, binds to 23S rRNA. Forms part of two intersubunit bridges in the 70S ribosome. In Cronobacter sakazakii (strain ATCC BAA-894) (Enterobacter sakazakii), this protein is Large ribosomal subunit protein uL14.